Reading from the N-terminus, the 87-residue chain is Small ribosomal subunit protein bS20 (87 aa).

The disordered stretch occupies residues 1–24 (MANTAQARKRARQSVERNKHNSSL).

It belongs to the bacterial ribosomal protein bS20 family.

In terms of biological role, binds directly to 16S ribosomal RNA. The protein is Small ribosomal subunit protein bS20 of Bordetella petrii (strain ATCC BAA-461 / DSM 12804 / CCUG 43448).